The primary structure comprises 542 residues: MHSSSVHVPLIEFLKNRIYLGAYDHHKRDTEDLAYFTVEDALPYNAFYMDFGPLNIGHLYRFAVLLHKKLNEDSTQGKGLVIYSSTSPKERANLACLLCCYMILLQNWAPHQVLQPIAQITPPLQAFRDAGYSSADYEITIQDVVYAMWRAKERGMIDLAKFDLDEYEQYERVDQGDFNVISKDFIAFASPQQSKRGGLNEPFQKVLEYFVENNVQLVVRLNSHLYDAKEFTKRNIKHIDMIFDDGTCPTLEYVQKFIGAAECIINKGGKIAVHCKAGLGRTGCLIGAHLIYTHGFTANECIAYMRMIRPGMVVGPQQHWLYLHHDDFRSWRHTMIVDNRPDPLIGNLFPLCSYEDYKQRLKEAKRKERLQLQQQLTSPLADSSVINTPIRRRKVSGALASKIQTVVPIESPGQPRKYFEDSEDIDEVEMVNNSDDENTMQDIIQSSPARYDSVTPKTKDNSDWRVLRSISTNNVSSQQSIHIIKTTTTKTVNETLSSPPGTSPTNVLRVSKARSKNRIASGNSQTSRAHSGGVRKLSGKKH.

Residues 177–334 form the Tyrosine-protein phosphatase domain; it reads DFNVISKDFI…HDDFRSWRHT (158 aa). The active-site Phosphocysteine intermediate is Cys275. Residues 516–542 are disordered; the sequence is KNRIASGNSQTSRAHSGGVRKLSGKKH. Residues 518–529 are compositionally biased toward polar residues; it reads RIASGNSQTSRA.

This sequence belongs to the protein-tyrosine phosphatase family. Non-receptor class CDC14 subfamily. In terms of processing, mainly phosphorylated as the cells are passing through mitosis in yeast form cells. Phosphorylation is delayed in hyphal-induced cells, indicating that the timing of cell-cycle progression occurs with different kinetics in hyphae and in yeast cells.

Its subcellular location is the nucleus. It is found in the nucleolus. The protein localises to the cytoplasm. It localises to the bud neck. The protein resides in the cytoskeleton. Its subcellular location is the spindle pole. It is found in the cell septum. The enzyme catalyses O-phospho-L-tyrosyl-[protein] + H2O = L-tyrosyl-[protein] + phosphate. Protein phosphatase which antagonizes mitotic cyclin-dependent kinase CDC28, the inactivation of which is essential for exit from mitosis. To access its substrates, is released from nucleolar sequestration during mitosis. Plays an essential in coordinating the nuclear division cycle with cytokinesis through the cytokinesis checkpoint. Involved in chromosome segregation, where it is required for meiosis I spindle dissambly as well as for establishing two consecutive chromosome segregation phases. Plays a role in the expression of hydrolase genes such as CHT3 and ENG1 involved in septum degradation after cytokinesis. Also required for ACE2 localization to the daughter nucleus. Required for invasive and hyphal growth. The sequence is that of Tyrosine-protein phosphatase CDC14 (CDC14) from Candida albicans (strain SC5314 / ATCC MYA-2876) (Yeast).